Consider the following 521-residue polypeptide: Bifunctional purine biosynthesis protein PurH (521 aa).

One can recognise an MGS-like domain in the interval 1 to 145 (MIKQALISVS…KNHRDVTVVV (145 aa)).

Belongs to the PurH family.

It catalyses the reaction (6R)-10-formyltetrahydrofolate + 5-amino-1-(5-phospho-beta-D-ribosyl)imidazole-4-carboxamide = 5-formamido-1-(5-phospho-D-ribosyl)imidazole-4-carboxamide + (6S)-5,6,7,8-tetrahydrofolate. The enzyme catalyses IMP + H2O = 5-formamido-1-(5-phospho-D-ribosyl)imidazole-4-carboxamide. Its pathway is purine metabolism; IMP biosynthesis via de novo pathway; 5-formamido-1-(5-phospho-D-ribosyl)imidazole-4-carboxamide from 5-amino-1-(5-phospho-D-ribosyl)imidazole-4-carboxamide (10-formyl THF route): step 1/1. It functions in the pathway purine metabolism; IMP biosynthesis via de novo pathway; IMP from 5-formamido-1-(5-phospho-D-ribosyl)imidazole-4-carboxamide: step 1/1. This chain is Bifunctional purine biosynthesis protein PurH, found in Burkholderia pseudomallei (strain 1106a).